A 325-amino-acid polypeptide reads, in one-letter code: Elongation factor P--(R)-beta-lysine ligase (325 aa).

Residue 76–78 coordinates substrate; it reads SPE. ATP contacts are provided by residues 100–102 and Asn109; that span reads RNE. Tyr118 contributes to the substrate binding site. Residue 244-245 coordinates ATP; that stretch reads EL. Glu251 serves as a coordination point for substrate. ATP is bound at residue Gly300.

The protein belongs to the class-II aminoacyl-tRNA synthetase family. EpmA subfamily. As to quaternary structure, homodimer.

The catalysed reaction is D-beta-lysine + L-lysyl-[protein] + ATP = N(6)-((3R)-3,6-diaminohexanoyl)-L-lysyl-[protein] + AMP + diphosphate + H(+). In terms of biological role, with EpmB is involved in the beta-lysylation step of the post-translational modification of translation elongation factor P (EF-P). Catalyzes the ATP-dependent activation of (R)-beta-lysine produced by EpmB, forming a lysyl-adenylate, from which the beta-lysyl moiety is then transferred to the epsilon-amino group of a conserved specific lysine residue in EF-P. This Pectobacterium carotovorum subsp. carotovorum (strain PC1) protein is Elongation factor P--(R)-beta-lysine ligase.